The sequence spans 321 residues: Pectinesterase (321 aa).

At Thr-1 the chain carries N-acetylthreonine. Asn-75 carries an N-linked (GlcNAc...) (complex) asparagine glycan. Positions 84 and 114 each coordinate substrate. The Proton donor role is filled by Asp-137. Cys-151 and Cys-171 are joined by a disulfide. Asp-158 acts as the Nucleophile in catalysis. Arg-226 and Trp-228 together coordinate substrate. Asn-275, Asn-290, and Asn-319 each carry an N-linked (GlcNAc...) (complex) asparagine glycan.

It belongs to the pectinesterase family. In terms of processing, the N-glycans attached at Asn-75, Asn-275, Asn-290 and Asn-319 are complex oligosaccharides containing xylose, fucose, hexose and N-acetylglucosamine.

The catalysed reaction is [(1-&gt;4)-alpha-D-galacturonosyl methyl ester](n) + n H2O = [(1-&gt;4)-alpha-D-galacturonosyl](n) + n methanol + n H(+). It participates in glycan metabolism; pectin degradation; 2-dehydro-3-deoxy-D-gluconate from pectin: step 1/5. With respect to regulation, inhibited by PMEI. The polypeptide is Pectinesterase (Actinidia deliciosa (Kiwi)).